The chain runs to 189 residues: Small ribosomal subunit protein uS7 (189 aa).

The protein belongs to the universal ribosomal protein uS7 family. Component of the small ribosomal subunit.

It is found in the cytoplasm. This is Small ribosomal subunit protein uS7 (RPS5) from Encephalitozoon cuniculi (strain GB-M1) (Microsporidian parasite).